The following is a 325-amino-acid chain: Tetraacyldisaccharide 4'-kinase (325 aa).

An ATP-binding site is contributed by 58-65 (TVGGSGKT).

Belongs to the LpxK family.

The enzyme catalyses a lipid A disaccharide + ATP = a lipid IVA + ADP + H(+). Its pathway is glycolipid biosynthesis; lipid IV(A) biosynthesis; lipid IV(A) from (3R)-3-hydroxytetradecanoyl-[acyl-carrier-protein] and UDP-N-acetyl-alpha-D-glucosamine: step 6/6. Its function is as follows. Transfers the gamma-phosphate of ATP to the 4'-position of a tetraacyldisaccharide 1-phosphate intermediate (termed DS-1-P) to form tetraacyldisaccharide 1,4'-bis-phosphate (lipid IVA). This chain is Tetraacyldisaccharide 4'-kinase, found in Coxiella burnetii (strain CbuG_Q212) (Coxiella burnetii (strain Q212)).